The sequence spans 131 residues: Small ribosomal subunit protein uS8 (131 aa).

This sequence belongs to the universal ribosomal protein uS8 family. As to quaternary structure, part of the 30S ribosomal subunit. Contacts proteins S5 and S12.

Its function is as follows. One of the primary rRNA binding proteins, it binds directly to 16S rRNA central domain where it helps coordinate assembly of the platform of the 30S subunit. This chain is Small ribosomal subunit protein uS8, found in Sulfurovum sp. (strain NBC37-1).